The sequence spans 86 residues: MQFFAVALFATSALAAVCPTGLFSNPLCCATNVLDLIGVDCKTPTIAVDTGAIFQAHCASKGSKPLCCVAPVADQALLCQKAIGTF.

The signal sequence occupies residues 1–15; that stretch reads MQFFAVALFATSALA. Disulfide bonds link cysteine 18–cysteine 67, cysteine 28–cysteine 58, cysteine 29–cysteine 41, and cysteine 68–cysteine 79.

It belongs to the cerato-ulmin hydrophobin family. As to quaternary structure, homodimer. Homodimers further self-assemble to form highly ordered films at water-air interfaces through intermolecular interactions.

The protein localises to the secreted. It localises to the spore wall. The protein resides in the cell wall. Its function is as follows. Aerial growth, conidiation, and dispersal of filamentous fungi in the environment rely upon a capability of their secreting small amphipathic proteins called hydrophobins (HPBs) with low sequence identity. Class I can self-assemble into an outermost layer of rodlet bundles on aerial cell surfaces, conferring cellular hydrophobicity that supports fungal growth, development and dispersal; whereas Class II form highly ordered films at water-air interfaces through intermolecular interactions but contribute nothing to the rodlet structure. Hbf2 is a class II hydrophobin that is involved in sporuration. The chain is Class II hydrophobin 2 from Hypocrea jecorina (Trichoderma reesei).